The chain runs to 503 residues: Cytochrome P450 11B1, mitochondrial (503 aa).

Residues 1–24 constitute a mitochondrion transit peptide; sequence MAIWAKAEAWLAGPWLALNRARTL. Cysteine 450 serves as a coordination point for heme.

The protein belongs to the cytochrome P450 family. The cofactor is heme.

It is found in the mitochondrion inner membrane. The catalysed reaction is a steroid + 2 reduced [adrenodoxin] + O2 + 2 H(+) = an 11beta-hydroxysteroid + 2 oxidized [adrenodoxin] + H2O. It carries out the reaction 11-deoxycortisol + 2 reduced [adrenodoxin] + O2 + 2 H(+) = cortisol + 2 oxidized [adrenodoxin] + H2O. The enzyme catalyses 21-hydroxyprogesterone + 2 reduced [adrenodoxin] + O2 + 2 H(+) = corticosterone + 2 oxidized [adrenodoxin] + H2O. It catalyses the reaction corticosterone + 2 reduced [adrenodoxin] + O2 + 2 H(+) = 18-hydroxycorticosterone + 2 oxidized [adrenodoxin] + H2O. The catalysed reaction is 18-hydroxycorticosterone + 2 reduced [adrenodoxin] + O2 + 2 H(+) = aldosterone + 2 oxidized [adrenodoxin] + 2 H2O. It carries out the reaction 21-hydroxyprogesterone + 2 reduced [adrenodoxin] + O2 + 2 H(+) = 19-hydroxy-11-deoxycorticosterone + 2 oxidized [adrenodoxin] + H2O. The enzyme catalyses 19-hydroxy-11-deoxycorticosterone + 2 reduced [adrenodoxin] + O2 + 2 H(+) = 19-oxo-11-deoxycorticosterone + 2 oxidized [adrenodoxin] + 2 H2O. Its pathway is steroid biosynthesis; glucocorticoid biosynthesis. It participates in steroid hormone biosynthesis. A cytochrome P450 monooxygenase that catalyzes the biosynthesis of aldosterone and other adrenal corticoids. Differing from other species (such as human, rat and mice), it is able to catalyze three sequential oxidative reactions of 11-deoxycorticosterone (21-hydroxyprogesterone), namely 11-beta hydroxylation, followed by two successive oxidations at C18 yielding 18-hydroxy and then 18-oxo intermediates, and ending with the formation of aldosterone. Steroid 11beta, 18- and 19-hydroxylase. Mechanistically, uses molecular oxygen inserting one oxygen atom into a substrate and reducing the second into a water molecule. Two electrons are provided by NADPH via a two-protein mitochondrial transfer system comprising flavoprotein FDXR (adrenodoxin/ferredoxin reductase) and nonheme iron-sulfur protein FDX1 or FDX2 (adrenodoxin/ferredoxin). The chain is Cytochrome P450 11B1, mitochondrial (CYP11B1) from Sus scrofa (Pig).